Consider the following 612-residue polypeptide: Methionine--tRNA ligase (612 aa).

The 'HIGH' region signature appears at 12–22 (PYANGPRHIGH). Residues C144, C147, C157, and C160 each contribute to the Zn(2+) site. The short motif at 348 to 352 (KFSSS) is the 'KMSKS' region element. ATP is bound at residue S351.

Belongs to the class-I aminoacyl-tRNA synthetase family. MetG type 1 subfamily. In terms of assembly, monomer. It depends on Zn(2+) as a cofactor.

The protein localises to the cytoplasm. It carries out the reaction tRNA(Met) + L-methionine + ATP = L-methionyl-tRNA(Met) + AMP + diphosphate. Is required not only for elongation of protein synthesis but also for the initiation of all mRNA translation through initiator tRNA(fMet) aminoacylation. This is Methionine--tRNA ligase from Corynebacterium kroppenstedtii (strain DSM 44385 / JCM 11950 / CIP 105744 / CCUG 35717).